Consider the following 875-residue polypeptide: Probable ATP-dependent RNA helicase DDX10 (875 aa).

Positions 1 to 43 (MGKTANSPGSGARPDPVRSFNRWKKKHSHRQNKKKQLRKQLKK) are disordered. Phosphothreonine is present on Thr-4. Ser-7 carries the post-translational modification Phosphoserine. A compositionally biased stretch (basic residues) spans 21-41 (NRWKKKHSHRQNKKKQLRKQL). A Q motif motif is present at residues 69-97 (TRFSDFPLSKKTLKGLQEAQYRLVTEIQK). ATP is bound by residues 89–91 (YRL), Gln-96, and 113–120 (AKTGSGKT). The Helicase ATP-binding domain occupies 100 to 274 (IGLALQGKDV…RLSLKNPEYV (175 aa)). The DEAD box motif lies at 222–225 (DEAD). Residues 287–448 (TLEQNYIVCE…EIKINPEKLI (162 aa)) enclose the Helicase C-terminal domain. Ser-539 is subject to Phosphoserine. Lys-555 is subject to N6-acetyllysine. The segment at 562-631 (GGKRLEGTEH…QFLDRDEEEE (70 aa)) is disordered. Residues 564–575 (KRLEGTEHRQDN) show a composition bias toward basic and acidic residues. Phosphothreonine is present on Thr-577. Positions 577–593 (TGNEEQEEEEDDEEEME) are enriched in acidic residues. A compositionally biased stretch (polar residues) spans 603-613 (QAPSLPNTSEA). A Glycyl lysine isopeptide (Lys-Gly) (interchain with G-Cter in SUMO2) cross-link involves residue Lys-649. The segment at 703-850 (MQKSAIKDAE…HNRKKARWDT (148 aa)) is disordered. Over residues 727 to 741 (ERLQEEDKFDKEEYR) the composition is skewed to basic and acidic residues. Residues 742–751 (KKIKAKHREK) are compositionally biased toward basic residues. Over residues 752–771 (RLKEREARREANKRQAKAKD) the composition is skewed to basic and acidic residues. A compositionally biased stretch (acidic residues) spans 772–790 (EEEAFLDWSDDDDDDDDGF). Ser-780 is subject to Phosphoserine. Residues 812 to 821 (MENKISDTKK) show a composition bias toward basic and acidic residues. At Ser-831 the chain carries Phosphoserine.

The protein belongs to the DEAD box helicase family. DDX10/DBP4 subfamily. In terms of assembly, interacts with AIM2; this interaction promotes AIM2 stability. Interacts with SCNA; this interaction causes DDX10 mislocalization to the nucleoplasm and cytoplasmic inclusions. As to expression, high in testis but widely expressed.

The protein resides in the cytoplasm. It is found in the nucleus. It localises to the nucleolus. It catalyses the reaction ATP + H2O = ADP + phosphate + H(+). Its function is as follows. Putative ATP-dependent RNA helicase that plays various role in innate immunity or inflammation. Plays a role in the enhancement of AIM2-induced inflammasome activation by interacting with AIM2 and stabilizing its protein level. Negatively regulates viral infection by promoting interferon beta production and interferon stimulated genes/ISGs expression. The sequence is that of Probable ATP-dependent RNA helicase DDX10 (DDX10) from Homo sapiens (Human).